We begin with the raw amino-acid sequence, 263 residues long: Phosphatidylglycerol--prolipoprotein diacylglyceryl transferase (263 aa).

The next 4 membrane-spanning stretches (helical) occupy residues 6–26, 50–70, 85–105, and 112–132; these read VIFS…VLGI, LLTA…VLIY, TWEG…AVII, and IPIF…LFLG. Arg133 lines the a 1,2-diacyl-sn-glycero-3-phospho-(1'-sn-glycerol) pocket. 3 helical membrane-spanning segments follow: residues 169–189, 197–217, and 233–253; these read LYEA…LFFL, GALT…VEFF, and MGQL…LGAL.

Belongs to the Lgt family.

It is found in the cell membrane. The catalysed reaction is L-cysteinyl-[prolipoprotein] + a 1,2-diacyl-sn-glycero-3-phospho-(1'-sn-glycerol) = an S-1,2-diacyl-sn-glyceryl-L-cysteinyl-[prolipoprotein] + sn-glycerol 1-phosphate + H(+). The protein operates within protein modification; lipoprotein biosynthesis (diacylglyceryl transfer). Catalyzes the transfer of the diacylglyceryl group from phosphatidylglycerol to the sulfhydryl group of the N-terminal cysteine of a prolipoprotein, the first step in the formation of mature lipoproteins. In Wolbachia sp. subsp. Drosophila simulans (strain wRi), this protein is Phosphatidylglycerol--prolipoprotein diacylglyceryl transferase.